We begin with the raw amino-acid sequence, 175 residues long: Alpha-crystallin B chain (175 aa).

M1 bears the N-acetylmethionine mark. Phosphoserine occurs at positions 19, 45, and 59. The sHSP domain maps to 56–164 (RAPSWIDTGL…PERTIPITRE (109 aa)). H83 contacts Zn(2+). At K92 the chain carries N6-acetyllysine. Positions 104, 106, 111, and 119 each coordinate Zn(2+). The disordered stretch occupies residues 145–175 (VNGPRKQVSGPERTIPITREEKPAVAAAPKK). The residue at position 166 (K166) is an N6-acetyllysine.

The protein belongs to the small heat shock protein (HSP20) family. Heteromer composed of three CRYAA and one CRYAB subunits. Aggregates with homologous proteins, including the small heat shock protein HSPB1, to form large heteromeric complexes. Inter-subunit bridging via zinc ions enhances stability, which is crucial as there is no protein turn over in the lens. Interacts with HSPBAP1. Interacts with TTN/titin. Interacts with TMEM109; in the cellular response to DNA damage. Interacts with DES; binds rapidly during early stages of DES filament assembly and a reduced binding seen in the later stages. Interacts with TMED10; the interaction mediates the translocation from the cytoplasm into the ERGIC (endoplasmic reticulum-Golgi intermediate compartment) and thereby secretion. Interacts with ATP6V1A and with MTOR, forming a ternary complex. Abundantly expressed in the lens of the eye. Expressed in ventricular cardiomyocytes of the heart. Also expressed in skeletal muscle and the kidney.

Its subcellular location is the cytoplasm. The protein localises to the cytosol. It localises to the nucleus. It is found in the secreted. The protein resides in the lysosome. In terms of biological role, may contribute to the transparency and refractive index of the lens. Has chaperone-like activity, preventing aggregation of various proteins under a wide range of stress conditions. In lens epithelial cells, stabilizes the ATP6V1A protein, preventing its degradation by the proteasome. The sequence is that of Alpha-crystallin B chain from Mus musculus (Mouse).